Reading from the N-terminus, the 379-residue chain is Cytochrome b (379 aa).

4 helical membrane-spanning segments follow: residues 33 to 53 (FGSL…FLAM), 77 to 98 (WTIR…FIHV), 113 to 133 (WNIG…GYVL), and 178 to 198 (FFAL…IHLL). 2 residues coordinate heme b: His-83 and His-97. Heme b-binding residues include His-182 and His-196. A ubiquinone is bound at residue His-201. A run of 4 helical transmembrane segments spans residues 226-246 (TKDF…TLFY), 288-308 (LGGV…PFLQ), 320-340 (LSQF…WIGG), and 347-367 (FISI…FIMP).

It belongs to the cytochrome b family. The cytochrome bc1 complex contains 11 subunits: 3 respiratory subunits (MT-CYB, CYC1 and UQCRFS1), 2 core proteins (UQCRC1 and UQCRC2) and 6 low-molecular weight proteins (UQCRH/QCR6, UQCRB/QCR7, UQCRQ/QCR8, UQCR10/QCR9, UQCR11/QCR10 and a cleavage product of UQCRFS1). This cytochrome bc1 complex then forms a dimer. It depends on heme b as a cofactor.

The protein resides in the mitochondrion inner membrane. Its function is as follows. Component of the ubiquinol-cytochrome c reductase complex (complex III or cytochrome b-c1 complex) that is part of the mitochondrial respiratory chain. The b-c1 complex mediates electron transfer from ubiquinol to cytochrome c. Contributes to the generation of a proton gradient across the mitochondrial membrane that is then used for ATP synthesis. This Lepilemur randrianasoloi (Randrianasoli's sportive lemur) protein is Cytochrome b (MT-CYB).